Consider the following 468-residue polypeptide: Aspartate ammonia-lyase (468 aa).

Residues threonine 101, serine 140, threonine 141, asparagine 142, threonine 187, and histidine 188 each coordinate L-aspartate. The segment at 317-326 is SS loop; sequence GSSIMPGKVN. The active-site Proton acceptor is the serine 318. L-aspartate-binding residues include serine 319 and lysine 324.

The protein belongs to the class-II fumarase/aspartase family. Aspartase subfamily. In terms of assembly, homotetramer.

It catalyses the reaction L-aspartate = fumarate + NH4(+). Its activity is regulated as follows. Unlike E.coli aspartase, the enzyme is not activated by the presence of divalent metal ions at alkaline pH. Catalyzes the reversible conversion of L-aspartate to fumarate and ammonia. Is highly specific for L-aspartate in the deamination reaction, and cannot use alternative substrates such as D-aspartic acid, alpha-methyl-DL-aspartic acid, beta-methyl-DL-aspartic acid or L-glutamate. In the reverse reaction, alternative nucleophiles (such as hydroxylamine, hydrazine, methoxylamine and methylamine) can replace ammonia in vitro, leading to the formation of N-substituted aspartic acid derivatives. The chain is Aspartate ammonia-lyase from Bacillus sp.